A 688-amino-acid polypeptide reads, in one-letter code: Homoaconitase, mitochondrial (688 aa).

Cysteine 335, cysteine 395, and cysteine 398 together coordinate [4Fe-4S] cluster. The interval 468–494 is disordered; sequence SIDLPKSSGNTGATSEEPISEDDTSEA.

It belongs to the aconitase/IPM isomerase family. Requires [4Fe-4S] cluster as cofactor.

It localises to the mitochondrion. It catalyses the reaction (2R,3S)-homoisocitrate = cis-homoaconitate + H2O. Its pathway is amino-acid biosynthesis; L-lysine biosynthesis via AAA pathway; L-alpha-aminoadipate from 2-oxoglutarate: step 3/5. Functionally, catalyzes the reversible hydration of cis-homoaconitate to (2R,3S)-homoisocitrate, a step in the alpha-aminoadipate pathway for lysine biosynthesis. The protein is Homoaconitase, mitochondrial (LYS4) of Candida parapsilosis (Yeast).